Here is a 33-residue protein sequence, read N- to C-terminus: Beta-theraphotoxin-Cm1b (33 aa).

3 disulfides stabilise this stretch: Cys-2/Cys-17, Cys-9/Cys-22, and Cys-16/Cys-29. The residue at position 33 (Leu-33) is a Leucine amide.

Belongs to the neurotoxin 10 (Hwtx-1) family. 04 (CcoTx1) subfamily. As to expression, expressed by the venom gland.

It is found in the secreted. Inhibits several voltage-gated sodium channels and only one voltage-gated calcium channel (Cav2.2/CACNA1B (IC(50)=1.1 uM) and Nav1.2/SCN2A (IC(50)=3.7-80 nM), Nav1.3/SCN3A (IC(50)=88-5570 nM), Nav1.1/SCN1A (IC(50)=170-407 nM), Nav1.7/SCN9A (IC(50)=95.5-230 nM), Nav1.6/SCN6A (IC(50)=49.9-3990 nM), Nav1.4/SCN4A (IC(50)=113-400 nM or &gt;10 uM), Nav1.5/SCN5A (IC(50)=1524-1634 nM or &gt;10 uM)). The toxin acts by shifting the voltage dependence of channel activation to more depolarized potentials and by blocking the inward component of the sodium current. It shows moderate affinity for lipid bilayers without cholesterol and high affinity for lipid bilayers containing cholesterol. In vivo, this toxin causes general ataxia, lack of response to stimuli, and semiparalysis. After a few minutes, the mice are unable to stand, and breathing is reduced in rhythm and intensity. Symptoms gradually increase with progressive slowing of breathing and flaccid paralysis; death occurred within 10 to 20 minutes post injection. Animals remain totally flaccid, and no symptoms of excitatory neurotoxicity are observed. The protein is Beta-theraphotoxin-Cm1b of Ceratogyrus marshalli (Straighthorned baboon tarantula).